Here is a 202-residue protein sequence, read N- to C-terminus: LexA repressor (202 aa).

A DNA-binding region (H-T-H motif) is located at residues 28–48; the sequence is RAEIAQELGFKSPNAAEEHLK. Active-site for autocatalytic cleavage activity residues include Ser-123 and Lys-160.

Belongs to the peptidase S24 family. In terms of assembly, homodimer.

It carries out the reaction Hydrolysis of Ala-|-Gly bond in repressor LexA.. Functionally, represses a number of genes involved in the response to DNA damage (SOS response), including recA and lexA. In the presence of single-stranded DNA, RecA interacts with LexA causing an autocatalytic cleavage which disrupts the DNA-binding part of LexA, leading to derepression of the SOS regulon and eventually DNA repair. This chain is LexA repressor, found in Pseudomonas chlororaphis (Pseudomonas aureofaciens).